A 268-amino-acid chain; its full sequence is Tryptophan synthase alpha chain (268 aa).

Residues Glu-49 and Asp-60 each act as proton acceptor in the active site.

This sequence belongs to the TrpA family. Tetramer of two alpha and two beta chains.

It carries out the reaction (1S,2R)-1-C-(indol-3-yl)glycerol 3-phosphate + L-serine = D-glyceraldehyde 3-phosphate + L-tryptophan + H2O. It participates in amino-acid biosynthesis; L-tryptophan biosynthesis; L-tryptophan from chorismate: step 5/5. In terms of biological role, the alpha subunit is responsible for the aldol cleavage of indoleglycerol phosphate to indole and glyceraldehyde 3-phosphate. The chain is Tryptophan synthase alpha chain from Escherichia coli (strain SMS-3-5 / SECEC).